We begin with the raw amino-acid sequence, 217 residues long: Ribonuclease HII 2 (217 aa).

In terms of domain architecture, RNase H type-2 spans G28–P217. D34, E35, and D126 together coordinate a divalent metal cation.

The protein belongs to the RNase HII family. It depends on Mn(2+) as a cofactor. Requires Mg(2+) as cofactor.

The protein localises to the cytoplasm. The enzyme catalyses Endonucleolytic cleavage to 5'-phosphomonoester.. Endonuclease that specifically degrades the RNA of RNA-DNA hybrids. This is Ribonuclease HII 2 from Methylibium petroleiphilum (strain ATCC BAA-1232 / LMG 22953 / PM1).